The sequence spans 106 residues: uncharacterized protein (106 aa).

The helical transmembrane segment at 9 to 27 (ALAALAFTLGLIGLAAWAL) threads the bilayer. The interval 84-106 (TPKGPPPASALSPSPVAEPEPVV) is disordered.

It belongs to the FliO/MopB family.

Its subcellular location is the cell membrane. It localises to the bacterial flagellum basal body. This is an uncharacterized protein from Caulobacter vibrioides (strain ATCC 19089 / CIP 103742 / CB 15) (Caulobacter crescentus).